The sequence spans 81 residues: Insect-toxin Cn10 (81 aa).

Residues 1 to 13 (ITACLVLIGTVCA) form the signal peptide. The region spanning 14-79 (KEGYLVNKST…TYPIPGKTCR (66 aa)) is the LCN-type CS-alpha/beta domain. 4 disulfides stabilise this stretch: cysteine 25-cysteine 78, cysteine 29-cysteine 54, cysteine 38-cysteine 59, and cysteine 42-cysteine 61. Position 81 (lysine 81) is a propeptide, removed by a carboxypeptidase.

Belongs to the long (4 C-C) scorpion toxin superfamily. Sodium channel inhibitor family. Beta subfamily. Expressed by the venom gland.

The protein resides in the secreted. In terms of biological role, beta toxins bind voltage-independently at site-4 of sodium channels (Nav) and shift the voltage of activation toward more negative potentials thereby affecting sodium channel activation and promoting spontaneous and repetitive firing. Is toxic on insects and crustaceans, but not on mammals. The chain is Insect-toxin Cn10 from Centruroides noxius (Mexican scorpion).